Reading from the N-terminus, the 174-residue chain is Shikimate kinase 2 (174 aa).

12 to 17 (GCGKTT) contacts ATP. T16 and D32 together coordinate Mg(2+). Residues D34, R58, and G79 each contribute to the substrate site. The interval 112–126 (EAFPEEGQRPTLTGK) is LID domain. R120 contacts ATP. R139 serves as a coordination point for substrate. Q155 serves as a coordination point for ATP.

The protein belongs to the shikimate kinase family. AroL subfamily. Monomer. Mg(2+) is required as a cofactor.

Its subcellular location is the cytoplasm. It carries out the reaction shikimate + ATP = 3-phosphoshikimate + ADP + H(+). It participates in metabolic intermediate biosynthesis; chorismate biosynthesis; chorismate from D-erythrose 4-phosphate and phosphoenolpyruvate: step 5/7. Its function is as follows. Catalyzes the specific phosphorylation of the 3-hydroxyl group of shikimic acid using ATP as a cosubstrate. This is Shikimate kinase 2 from Enterobacter sp. (strain 638).